We begin with the raw amino-acid sequence, 598 residues long: NADH-ubiquinone oxidoreductase chain 5 (598 aa).

Helical transmembrane passes span 6–26 (LTLI…PPII), 32–52 (MILT…PLTI), 84–100 (YTVI…WSIM), 113–133 (MDKF…FISA), 136–156 (LLQL…LISW), 241–261 (TPVS…FLLI), 272–292 (LMLE…ALCA), 301–320 (IIAF…VGLN), 325–347 (AFLH…GSII), 370–390 (TTCM…AGFF), 409–429 (LMVT…LIIM), 456–476 (LAWG…PMKP), 478–498 (IFTM…ISLI), and 576–596 (LNSA…LSLT).

This sequence belongs to the complex I subunit 5 family.

The protein localises to the mitochondrion inner membrane. It catalyses the reaction a ubiquinone + NADH + 5 H(+)(in) = a ubiquinol + NAD(+) + 4 H(+)(out). Functionally, core subunit of the mitochondrial membrane respiratory chain NADH dehydrogenase (Complex I) that is believed to belong to the minimal assembly required for catalysis. Complex I functions in the transfer of electrons from NADH to the respiratory chain. The immediate electron acceptor for the enzyme is believed to be ubiquinone. This chain is NADH-ubiquinone oxidoreductase chain 5 (MT-ND5), found in Petromyzon marinus (Sea lamprey).